The chain runs to 288 residues: MNEIVITDTDFCRFRDYFYQKTGIFFENSKRYFVDKRLLQRIELTEHQSFRGYFTYLRFQASGEELQAVINALTVNETYFFREISQLESLVEEVLDDIVRHRPGELIRIWSMPCSSGEEPYSIVLFLLEHWPKLEQVDIEIIASDIDTGILQKAAQGIFSARSVKNLPNSSLNKYFSLRADGSYQLIDDIRQSVRFTQTNLNNRAEVQKLGAMDVIFCRNLLIYFDDISRRNAVESFYEQLNPGGVLFLGHSESMSRISSIFHVKRFRKSTGYYKPHKGKSDEKSNGR.

Residues 1–280 (MNEIVITDTD…TGYYKPHKGK (280 aa)) form the CheR-type methyltransferase domain. Residues Asn76, Thr78, Arg82, Glu119, Asp145, 200-201 (NL), and 219-220 (RN) each bind S-adenosyl-L-methionine.

It carries out the reaction L-glutamyl-[protein] + S-adenosyl-L-methionine = [protein]-L-glutamate 5-O-methyl ester + S-adenosyl-L-homocysteine. Methylation of the membrane-bound methyl-accepting chemotaxis proteins (MCP) to form gamma-glutamyl methyl ester residues in MCP. This Vibrio cholerae serotype O1 (strain ATCC 39315 / El Tor Inaba N16961) protein is Chemotaxis protein methyltransferase 2 (cheR2).